A 224-amino-acid chain; its full sequence is Ribose-5-phosphate isomerase A (224 aa).

Substrate is bound by residues 32–35 (TGST), 85–88 (DGAD), and 98–101 (KGGG). E107 acts as the Proton acceptor in catalysis. K125 lines the substrate pocket.

This sequence belongs to the ribose 5-phosphate isomerase family. As to quaternary structure, homodimer.

It carries out the reaction aldehydo-D-ribose 5-phosphate = D-ribulose 5-phosphate. It participates in carbohydrate degradation; pentose phosphate pathway; D-ribose 5-phosphate from D-ribulose 5-phosphate (non-oxidative stage): step 1/1. Its function is as follows. Catalyzes the reversible conversion of ribose-5-phosphate to ribulose 5-phosphate. This Pseudomonas putida (strain GB-1) protein is Ribose-5-phosphate isomerase A.